A 67-amino-acid polypeptide reads, in one-letter code: MKAKDIRKKSQEELQKELVELKAELFKLRFQHATNQLENPMKLRDVKKSIARIKTVLRERELKGIEV.

It belongs to the universal ribosomal protein uL29 family.

This is Large ribosomal subunit protein uL29 from Acetivibrio thermocellus (strain ATCC 27405 / DSM 1237 / JCM 9322 / NBRC 103400 / NCIMB 10682 / NRRL B-4536 / VPI 7372) (Clostridium thermocellum).